A 305-amino-acid chain; its full sequence is Serine/threonine-protein phosphatase ppe1 (305 aa).

Mn(2+)-binding residues include Asp-51, His-53, Asp-79, and Asn-111. Residue His-112 is the Proton donor of the active site. The Mn(2+) site is built by His-161 and His-235.

Belongs to the PPP phosphatase family. PP-6 (PP-V) subfamily. Interacts with sts5, ekc1 and mis12. Mn(2+) serves as cofactor.

It is found in the nucleus. It carries out the reaction O-phospho-L-seryl-[protein] + H2O = L-seryl-[protein] + phosphate. It catalyses the reaction O-phospho-L-threonyl-[protein] + H2O = L-threonyl-[protein] + phosphate. Functionally, has a role in chromosome segregation. May provide a dynamic connection between kinetochore microtubules and kinetochore chromatin. Negatively regulates mis12. This is Serine/threonine-protein phosphatase ppe1 (ppe1) from Schizosaccharomyces pombe (strain 972 / ATCC 24843) (Fission yeast).